The primary structure comprises 778 residues: Glutathione biosynthesis bifunctional protein GshAB (778 aa).

A glutamate--cysteine ligase region spans residues 1–354 (MVNLDKGLLK…EEFFKNHDMV (354 aa)). One can recognise an ATP-grasp domain in the interval 521–777 (KDILRENNIR…AGEKILDLLF (257 aa)). 548 to 606 (RLFKDEKIVIKPKSTNFGLGISIFPGEYSREDYDKAVEIAFREDSSILIEEFMTGKEYR) provides a ligand contact to ATP. 3 residues coordinate Mg(2+): Asp-728, Glu-747, and Asn-749. Mn(2+)-binding residues include Asp-728, Glu-747, and Asn-749.

It in the N-terminal section; belongs to the glutamate--cysteine ligase type 1 family. Type 2 subfamily. Monomer. Mg(2+) serves as cofactor. Requires Mn(2+) as cofactor.

The enzyme catalyses L-cysteine + L-glutamate + ATP = gamma-L-glutamyl-L-cysteine + ADP + phosphate + H(+). It catalyses the reaction gamma-L-glutamyl-L-cysteine + glycine + ATP = glutathione + ADP + phosphate + H(+). It participates in sulfur metabolism; glutathione biosynthesis; glutathione from L-cysteine and L-glutamate: step 1/2. It functions in the pathway sulfur metabolism; glutathione biosynthesis; glutathione from L-cysteine and L-glutamate: step 2/2. Its function is as follows. Synthesizes glutathione from L-glutamate and L-cysteine via gamma-L-glutamyl-L-cysteine. The protein is Glutathione biosynthesis bifunctional protein GshAB of Clostridium perfringens (strain 13 / Type A).